Here is a 125-residue protein sequence, read N- to C-terminus: Large ribosomal subunit protein bL19 (125 aa).

It belongs to the bacterial ribosomal protein bL19 family.

Its function is as follows. This protein is located at the 30S-50S ribosomal subunit interface and may play a role in the structure and function of the aminoacyl-tRNA binding site. This Ehrlichia chaffeensis (strain ATCC CRL-10679 / Arkansas) protein is Large ribosomal subunit protein bL19.